The primary structure comprises 428 residues: Diaminopimelate decarboxylase (428 aa).

Lys64 carries the post-translational modification N6-(pyridoxal phosphate)lysine. Residues Gly239 and 281 to 284 (EPGR) each bind pyridoxal 5'-phosphate. The substrate site is built by Arg284, Arg319, and Tyr323. Cys350 (proton donor) is an active-site residue. Glu351 and Tyr379 together coordinate substrate. A pyridoxal 5'-phosphate-binding site is contributed by Tyr379.

Belongs to the Orn/Lys/Arg decarboxylase class-II family. LysA subfamily. Homodimer. Pyridoxal 5'-phosphate is required as a cofactor.

The catalysed reaction is meso-2,6-diaminopimelate + H(+) = L-lysine + CO2. It functions in the pathway amino-acid biosynthesis; L-lysine biosynthesis via DAP pathway; L-lysine from DL-2,6-diaminopimelate: step 1/1. Functionally, specifically catalyzes the decarboxylation of meso-diaminopimelate (meso-DAP) to L-lysine. The polypeptide is Diaminopimelate decarboxylase (Methanothermobacter thermautotrophicus (strain ATCC 29096 / DSM 1053 / JCM 10044 / NBRC 100330 / Delta H) (Methanobacterium thermoautotrophicum)).